Consider the following 127-residue polypeptide: Longitudinals lacking protein-like (127 aa).

The 66-residue stretch at 33–98 (TDVTLACEGQ…MYAGEVNVSQ (66 aa)) folds into the BTB domain.

The BTB domain interacts with the BTB domain of Trl in vitro. Found in a Pc-containing complex.

The protein localises to the nucleus. Functionally, required, together with Trl, for maintaining the repressed state of target genes including homeotic genes Scr and Ubx. May also be involved in the activation of homeotic genes. Binds to a DNA Polycomb response element (PRE) at the bithorax complex. Also binds to polytene chromosomes at several hundred sites, many of which are shared with Trl and ph-p. Required during embryonic development. The sequence is that of Longitudinals lacking protein-like from Drosophila melanogaster (Fruit fly).